The sequence spans 1173 residues: TBC1 domain family member 5 homolog A (1173 aa).

Disordered stretches follow at residues 22–203, 217–324, 425–446, and 823–872; these read KKSK…YYNE, NNYN…RNPN, DQDA…KPVS, and IVNQ…QNKG. Low complexity-rich tracts occupy residues 26–107, 127–203, and 217–290; these read SNIN…NNVN, NNNI…YYNE, and NNYN…QQYY. Residues 163–214 adopt a coiled-coil conformation; the sequence is NENYNENYNNNNNNNNNNNNNNNNNNNNNNNNNNNNNYYNENNNQQQLQQNY. Basic and acidic residues predominate over residues 299 to 313; that stretch reads QHEEFEKEIEQKEQD. Residues 314–324 are compositionally biased toward polar residues; the sequence is SSPINVNRNPN. The region spanning 374-729 is the Rab-GAP TBC domain; that stretch reads PKDTTVRSIF…ILWDSIFKES (356 aa). Residues 431–441 show a composition bias toward low complexity; it reads QQQQQQQQQQQ. Positions 885 to 930 form a coiled coil; sequence TFKQIINDLNEYNEEFQLAKENEQLKQQKSKLQKEVDTLKETQTHV. Residues 983–994 are compositionally biased toward polar residues; that stretch reads NNSKNRLPNKSV. Disordered regions lie at residues 983-1015 and 1054-1089; these read NNSK…QQTS and QSTQ…QQYN. 2 stretches are compositionally biased toward low complexity: residues 995–1015 and 1054–1078; these read QQST…QQTS and QSTQ…QSQQ. Over residues 1079–1089 the composition is skewed to polar residues; it reads NNDNSPFQQYN.

Its function is as follows. May act as a GTPase-activating protein for Rab family protein(s). The polypeptide is TBC1 domain family member 5 homolog A (tbc1d5A) (Dictyostelium discoideum (Social amoeba)).